The primary structure comprises 366 residues: METSPLILLAAGGTGGHLFPAEALGVELIRRGFRVRLVTDERALRYSGLFSKDMIDVVSSETARGRNPFQVAYAGLTLAAGTLSAYSLIKRLKPVAVVGFGGYPTLPPLVAAKFAGVPGIIHDANAVLGRANRFLSSRVRAIATSLPGVLDRDPALSGKTTTVGTPMRPAVLAAAAVPYAAPEANGPLRLLVVGGSQGARIMADIVPGAIERLEPALWGRLILTQQVRDEDMNRVRAVYDKLKIKAELAPFFTDLPARLASNHLVVSRSGAGTVAELAAIGRPSILVPLPGSIDQDQFANAGVLAKVDGAIRIPQTEFTSDRLASEISALAAEPARLTAMAAAAKGAGRLDAAERLADLVVKVAGL.

UDP-N-acetyl-alpha-D-glucosamine-binding positions include 14 to 16 (TGG), asparagine 125, arginine 168, serine 196, and glutamine 297.

Belongs to the glycosyltransferase 28 family. MurG subfamily.

It localises to the cell inner membrane. It catalyses the reaction di-trans,octa-cis-undecaprenyl diphospho-N-acetyl-alpha-D-muramoyl-L-alanyl-D-glutamyl-meso-2,6-diaminopimeloyl-D-alanyl-D-alanine + UDP-N-acetyl-alpha-D-glucosamine = di-trans,octa-cis-undecaprenyl diphospho-[N-acetyl-alpha-D-glucosaminyl-(1-&gt;4)]-N-acetyl-alpha-D-muramoyl-L-alanyl-D-glutamyl-meso-2,6-diaminopimeloyl-D-alanyl-D-alanine + UDP + H(+). The protein operates within cell wall biogenesis; peptidoglycan biosynthesis. In terms of biological role, cell wall formation. Catalyzes the transfer of a GlcNAc subunit on undecaprenyl-pyrophosphoryl-MurNAc-pentapeptide (lipid intermediate I) to form undecaprenyl-pyrophosphoryl-MurNAc-(pentapeptide)GlcNAc (lipid intermediate II). This Bradyrhizobium diazoefficiens (strain JCM 10833 / BCRC 13528 / IAM 13628 / NBRC 14792 / USDA 110) protein is UDP-N-acetylglucosamine--N-acetylmuramyl-(pentapeptide) pyrophosphoryl-undecaprenol N-acetylglucosamine transferase.